The following is a 763-amino-acid chain: Xaa-Pro dipeptidyl-peptidase (763 aa).

Residues serine 349, aspartate 469, and histidine 499 each act as charge relay system in the active site.

The protein belongs to the peptidase S15 family. Homodimer.

It localises to the cytoplasm. The catalysed reaction is Hydrolyzes Xaa-Pro-|- bonds to release unblocked, N-terminal dipeptides from substrates including Ala-Pro-|-p-nitroanilide and (sequentially) Tyr-Pro-|-Phe-Pro-|-Gly-Pro-|-Ile.. Its function is as follows. Removes N-terminal dipeptides sequentially from polypeptides having unsubstituted N-termini provided that the penultimate residue is proline. The chain is Xaa-Pro dipeptidyl-peptidase from Streptococcus macedonicus (Streptococcus gallolyticus macedonicus).